Here is an 855-residue protein sequence, read N- to C-terminus: DNA mismatch repair protein MutS (855 aa).

ATP is bound at residue 613 to 620 (GPNMGGKS). The tract at residues 796–816 (TTSLPHEMPSQQSGKPASPMQ) is disordered.

Belongs to the DNA mismatch repair MutS family.

In terms of biological role, this protein is involved in the repair of mismatches in DNA. It is possible that it carries out the mismatch recognition step. This protein has a weak ATPase activity. In Pseudomonas aeruginosa (strain ATCC 15692 / DSM 22644 / CIP 104116 / JCM 14847 / LMG 12228 / 1C / PRS 101 / PAO1), this protein is DNA mismatch repair protein MutS.